The sequence spans 788 residues: Cyclin-F (788 aa).

Positions K20–R28 match the Nuclear localization signal 1 motif. In terms of domain architecture, F-box spans N29 to A76. One can recognise a Cyclin N-terminal domain in the interval H291–I405. 4 consecutive short sequence motifs (d box) follow at residues R310–L313, R343–L346, R349–L352, and R351–L354. 2 disordered regions span residues S566–F585 and T700–L788. A Nuclear localization signal 2 motif is present at residues R568–R574. Residues R582 to K766 are PEST. 2 stretches are compositionally biased toward polar residues: residues T700–R716 and R723–P738. Positions R767–L770 match the D box 5 motif.

The protein belongs to the cyclin family. Cyclin AB subfamily. Component of the SCF(CCNF) complex consisting of CUL1, RBX1, SKP1 and CCNF. Interacts with SKP1. Interacts with CUL1. Interacts with CCNB1; interaction is required for nuclear localization of CCNB1. Interacts with CCP110; this interaction leads to CCP110 ubiquitination and degradation via the proteasome pathway. Interacts (via the Cyclin N-terminal domain) with MYBL2/BMYB. Interacts with FZR1/CDH1 (via N-terminus). Interacts with RRM2 (via Cy motif and when phosphorylated at 'Thr-33'); the interaction occurs exclusively in G2 and early M. Interacts with CDC6 (via Cy motif); the interaction takes place during G2 and M phase. Degraded when the spindle assembly checkpoint is activated during the G2-M transition. Degradation is not dependent on the proteasome or ubiquitin and depends on the C-terminal PEST sequence. Post-translationally, phosphorylated just before cells enter into mitosis. In terms of processing, ubiquitinated by the anaphase-promoting complex (APC/C); leading to its degradation by the proteasome.

It localises to the nucleus. It is found in the cytoplasm. Its subcellular location is the perinuclear region. The protein resides in the cytoskeleton. The protein localises to the microtubule organizing center. It localises to the centrosome. It is found in the centriole. Its function is as follows. Substrate recognition component of a SCF (SKP1-CUL1-F-box protein) E3 ubiquitin-protein ligase complex which mediates the ubiquitination and subsequent proteasomal degradation of target proteins. The SCF(CCNF) E3 ubiquitin-protein ligase complex is an integral component of the ubiquitin proteasome system (UPS) and links proteasome degradation to the cell cycle. Mediates the substrate recognition and the proteasomal degradation of various target proteins involved in the regulation of cell cycle progression and in the maintenance of genome stability. Mediates the ubiquitination and subsequent proteasomal degradation of CP110 during G2 phase, thereby acting as an inhibitor of centrosome reduplication. In G2, mediates the ubiquitination and proteasomal degradation of CDC6, thereby suppressing DNA re-replication and preventing genome instability. Involved in the ubiquitination and degradation of the substrate adapter CDH1 of the anaphase-promoting complex (APC/C), thereby acting as an antagonist of APC/C in regulating G1 progression and S phase entry. May play a role in the G2 cell cycle checkpoint control after DNA damage, possibly by promoting the ubiquitination of MYBL2/BMYB. This Bos taurus (Bovine) protein is Cyclin-F (CCNF).